A 249-amino-acid polypeptide reads, in one-letter code: Phosphate import ATP-binding protein PstB (249 aa).

The region spanning 4 to 244 (VKIKDLSLFY…PQDKRTEDYI (241 aa)) is the ABC transporter domain. 36-43 (GPSGCGKS) contacts ATP.

This sequence belongs to the ABC transporter superfamily. Phosphate importer (TC 3.A.1.7) family. In terms of assembly, the complex is composed of two ATP-binding proteins (PstB), two transmembrane proteins (PstC and PstA) and a solute-binding protein (PstS).

The protein resides in the cell membrane. It catalyses the reaction phosphate(out) + ATP + H2O = ADP + 2 phosphate(in) + H(+). Functionally, part of the ABC transporter complex PstSACB involved in phosphate import. Responsible for energy coupling to the transport system. This Clostridium tetani (strain Massachusetts / E88) protein is Phosphate import ATP-binding protein PstB.